Here is a 702-residue protein sequence, read N- to C-terminus: Ribosomal RNA large subunit methyltransferase K/L (702 aa).

The THUMP domain occupies 43 to 154; it reads LIYQSLMWSR…KETASIALDL (112 aa).

Belongs to the methyltransferase superfamily. RlmKL family.

The protein resides in the cytoplasm. It carries out the reaction guanosine(2445) in 23S rRNA + S-adenosyl-L-methionine = N(2)-methylguanosine(2445) in 23S rRNA + S-adenosyl-L-homocysteine + H(+). It catalyses the reaction guanosine(2069) in 23S rRNA + S-adenosyl-L-methionine = N(2)-methylguanosine(2069) in 23S rRNA + S-adenosyl-L-homocysteine + H(+). Functionally, specifically methylates the guanine in position 2445 (m2G2445) and the guanine in position 2069 (m7G2069) of 23S rRNA. The sequence is that of Ribosomal RNA large subunit methyltransferase K/L from Salmonella arizonae (strain ATCC BAA-731 / CDC346-86 / RSK2980).